We begin with the raw amino-acid sequence, 982 residues long: Cell division cycle-associated protein 2 (982 aa).

Residues 75 to 87 are compositionally biased toward polar residues; that stretch reads VKTSSGKSTSSLQ. The segment at 75 to 97 is disordered; sequence VKTSSGKSTSSLQKARRRSTVGV. A phosphoserine mark is found at Ser100, Ser122, and Ser133. Disordered regions lie at residues 192–216 and 274–315; these read SGFPVNSSSKRRRISSQDSPDNYLS and TPLS…CGSS. 2 stretches are compositionally biased toward polar residues: residues 207 to 216 and 275 to 315; these read SQDSPDNYLS and PLSS…CGSS. Ser286, Ser296, and Ser306 each carry phosphoserine. At Thr309 the chain carries Phosphothreonine. The PP1-binding domain occupies 379-436; sequence KRKRVTFGEDLSPEVFDESLPANTPLCKGGTPVRPRTVKTTSPLQSPVHEQFLQPNFD. 2 positions are modified to phosphoserine: Ser390 and Ser397. 4 disordered regions span residues 400-473, 489-545, 568-638, and 651-716; these read ANTP…NTCS, TRTS…KSYR, KPLL…QSQV, and ASER…PQSQ. Position 402 is a phosphothreonine (Thr402). Residue Ser424 is modified to Phosphoserine. Polar residues-rich tracts occupy residues 451 to 473 and 498 to 512; these read SFANLSLSKSSLSETPPGTNTCS and TLSSTGVCSSYTTQA. Basic residues predominate over residues 518–545; sequence KMSRRKSREKKHTSAALPKKKQVLKSYR. A phosphoserine mark is found at Ser572 and Ser595. The segment covering 651–668 has biased composition (polar residues); sequence ASERGPNASTRDTGSEGN. Residues 669-685 are compositionally biased toward basic and acidic residues; it reads TRAESKCQSAKEPKPGT. The residue at position 735 (Ser735) is a Phosphoserine. Residue Lys741 forms a Glycyl lysine isopeptide (Lys-Gly) (interchain with G-Cter in SUMO2) linkage. Residues 910–982 form a disordered region; it reads ECPSSKEETI…SLKGESAQLP (73 aa). Ser913 bears the Phosphoserine mark. The segment covering 931 to 942 has biased composition (low complexity); it reads VSGSESQGVGSS. Ser950 carries the phosphoserine modification. Residues 952–964 show a composition bias toward polar residues; that stretch reads CGSTLTDANSATQ. Ser973 is subject to Phosphoserine.

Interacts with PPP1CC. Post-translationally, phosphorylated by CDK1. May regulate its subcellular location.

Its subcellular location is the nucleus. Regulator of chromosome structure during mitosis required for condensin-depleted chromosomes to retain their compact architecture through anaphase. Acts by mediating the recruitment of phopsphatase PP1-gamma subunit (PPP1CC) to chromatin at anaphase and into the following interphase. At anaphase onset, its association with chromatin targets a pool of PPP1CC to dephosphorylate substrates. The polypeptide is Cell division cycle-associated protein 2 (Cdca2) (Mus musculus (Mouse)).